The primary structure comprises 987 residues: Centrosomal protein of 120 kDa (987 aa).

Residues 1–112 (MVSKSDQLLI…QETKQAPKWY (112 aa)) enclose the C2 1 domain. The interval 352–408 (KTQNEHEPHHSKKRVLTPIKENTHTGPQSPSESPVPPHNQSPPTKDDATESEVESLL) is disordered. A C2 2 domain is found at 438–567 (SEAASGQKIA…LSSEKTRFLG (130 aa)). A coiled-coil region spans residues 670–919 (ENQLKQKELA…RLRQQEQKQY (250 aa)). Residues 912 to 926 (RQQEQKQYPDSREIA) are compositionally biased toward basic and acidic residues. The tract at residues 912–937 (RQQEQKQYPDSREIASGKMDGPHGSA) is disordered. Phosphoserine is present on Ser-936.

Belongs to the CEP120 family. Interacts with TACC2 and TACC3. Interacts with CCDC52.

Its subcellular location is the cytoplasm. It localises to the cytoskeleton. It is found in the microtubule organizing center. The protein resides in the centrosome. Its function is as follows. Plays a role in the microtubule-dependent coupling of the nucleus and the centrosome. Involved in the processes that regulate centrosome-mediated interkinetic nuclear migration (INM) of neural progenitors and for proper positioning of neurons during brain development. Also implicated in the migration and selfrenewal of neural progenitors. May play a role in centriole duplication during mitosis. Required for the recruitment of CEP295 to the proximal end of new-born centrioles at the centriolar microtubule wall during early S phase in a PLK4-dependent manner. The polypeptide is Centrosomal protein of 120 kDa (CEP120) (Bos taurus (Bovine)).